Here is a 584-residue protein sequence, read N- to C-terminus: Alkaline nuclease (584 aa).

The disordered stretch occupies residues 409–429; it reads GGGADHHLRGSPGDSPPPIPF.

Belongs to the herpesviridae alkaline nuclease family. Interacts with major DNA-binding protein; this interaction increases the nuclease processivity of the alkaline exonuclease.

The protein localises to the host nucleus. Its subcellular location is the host cytoplasm. Plays a role in processing non linear or branched viral DNA intermediates in order to promote the production of mature packaged unit-length linear progeny viral DNA molecules. Exhibits endonuclease and exonuclease activities and accepts both double-stranded and single-stranded DNA as substrate. Exonuclease digestion of DNA is in the 5'-&gt; 3' direction and the products are 5'-monophosphate nucleosides. Additionally, forms a recombinase with the major DNA-binding protein, which displays strand exchange activity. This is Alkaline nuclease (UL98) from Homo sapiens (Human).